The chain runs to 139 residues: Ribosome-binding factor A (139 aa).

A disordered region spans residues 120–139 (PENLLAVEDNTDEDDESFSE). The segment covering 128–139 (DNTDEDDESFSE) has biased composition (acidic residues).

This sequence belongs to the RbfA family. As to quaternary structure, monomer. Binds 30S ribosomal subunits, but not 50S ribosomal subunits or 70S ribosomes.

It is found in the cytoplasm. Its function is as follows. One of several proteins that assist in the late maturation steps of the functional core of the 30S ribosomal subunit. Associates with free 30S ribosomal subunits (but not with 30S subunits that are part of 70S ribosomes or polysomes). Required for efficient processing of 16S rRNA. May interact with the 5'-terminal helix region of 16S rRNA. The chain is Ribosome-binding factor A from Nostoc punctiforme (strain ATCC 29133 / PCC 73102).